The following is a 699-amino-acid chain: Cysteine--tRNA ligase (699 aa).

Positions 1-226 (MTTITEKRLT…SEQQRLIHNP (226 aa)) are unknown. Cys254 contacts Zn(2+). The short motif at 256–266 (MTVYDYCHLGH) is the 'HIGH' region element. Cys435, His460, and Glu464 together coordinate Zn(2+). Positions 508-512 (KMSKS) match the 'KMSKS' region motif. Lys511 lines the ATP pocket.

It belongs to the class-I aminoacyl-tRNA synthetase family. Monomer. Zn(2+) is required as a cofactor.

The protein resides in the cytoplasm. The catalysed reaction is tRNA(Cys) + L-cysteine + ATP = L-cysteinyl-tRNA(Cys) + AMP + diphosphate. This chain is Cysteine--tRNA ligase (cysS), found in Neisseria meningitidis serogroup A / serotype 4A (strain DSM 15465 / Z2491).